Consider the following 163-residue polypeptide: Phosphopantetheine adenylyltransferase (163 aa).

Ser-9 provides a ligand contact to substrate. Residues 9-10 and His-17 each bind ATP; that span reads SF. Lys-41, Thr-73, and Arg-87 together coordinate substrate. Residues 88-90, Glu-98, and 123-129 contribute to the ATP site; these read GLR and YSYLSSS.

It belongs to the bacterial CoaD family. In terms of assembly, homohexamer. Mg(2+) is required as a cofactor.

Its subcellular location is the cytoplasm. It catalyses the reaction (R)-4'-phosphopantetheine + ATP + H(+) = 3'-dephospho-CoA + diphosphate. Its pathway is cofactor biosynthesis; coenzyme A biosynthesis; CoA from (R)-pantothenate: step 4/5. Its function is as follows. Reversibly transfers an adenylyl group from ATP to 4'-phosphopantetheine, yielding dephospho-CoA (dPCoA) and pyrophosphate. The polypeptide is Phosphopantetheine adenylyltransferase (Lachnoclostridium phytofermentans (strain ATCC 700394 / DSM 18823 / ISDg) (Clostridium phytofermentans)).